Reading from the N-terminus, the 389-residue chain is Putative 8-amino-7-oxononanoate synthase (389 aa).

R22 is a substrate binding site. 109–110 (GY) contributes to the pyridoxal 5'-phosphate binding site. Residue H134 coordinates substrate. Pyridoxal 5'-phosphate is bound by residues S182, 207 to 210 (DDAH), and 238 to 241 (TLSK). K241 carries the N6-(pyridoxal phosphate)lysine modification. T350 contributes to the substrate binding site.

This sequence belongs to the class-II pyridoxal-phosphate-dependent aminotransferase family. BioF subfamily. Homodimer. Requires pyridoxal 5'-phosphate as cofactor.

The enzyme catalyses 6-carboxyhexanoyl-[ACP] + L-alanine + H(+) = (8S)-8-amino-7-oxononanoate + holo-[ACP] + CO2. The protein operates within cofactor biosynthesis; biotin biosynthesis. Functionally, catalyzes the decarboxylative condensation of pimeloyl-[acyl-carrier protein] and L-alanine to produce 8-amino-7-oxononanoate (AON), [acyl-carrier protein], and carbon dioxide. This Parvibaculum lavamentivorans (strain DS-1 / DSM 13023 / NCIMB 13966) protein is Putative 8-amino-7-oxononanoate synthase (bioF).